Reading from the N-terminus, the 184-residue chain is Peptidyl-tRNA hydrolase (184 aa).

Tyrosine 14 lines the tRNA pocket. Histidine 19 functions as the Proton acceptor in the catalytic mechanism. TRNA-binding residues include phenylalanine 64, asparagine 66, and asparagine 112.

The protein belongs to the PTH family. In terms of assembly, monomer.

The protein resides in the cytoplasm. It carries out the reaction an N-acyl-L-alpha-aminoacyl-tRNA + H2O = an N-acyl-L-amino acid + a tRNA + H(+). Functionally, hydrolyzes ribosome-free peptidyl-tRNAs (with 1 or more amino acids incorporated), which drop off the ribosome during protein synthesis, or as a result of ribosome stalling. In terms of biological role, catalyzes the release of premature peptidyl moieties from peptidyl-tRNA molecules trapped in stalled 50S ribosomal subunits, and thus maintains levels of free tRNAs and 50S ribosomes. This chain is Peptidyl-tRNA hydrolase, found in Listeria innocua serovar 6a (strain ATCC BAA-680 / CLIP 11262).